A 233-amino-acid chain; its full sequence is tRNA (guanine-N(7)-)-methyltransferase (233 aa).

Glutamate 62, glutamate 87, aspartate 116, and aspartate 138 together coordinate S-adenosyl-L-methionine. Aspartate 138 is an active-site residue. Residues lysine 142, aspartate 174, and threonine 212 to glutamate 215 contribute to the substrate site.

It belongs to the class I-like SAM-binding methyltransferase superfamily. TrmB family.

It catalyses the reaction guanosine(46) in tRNA + S-adenosyl-L-methionine = N(7)-methylguanosine(46) in tRNA + S-adenosyl-L-homocysteine. It participates in tRNA modification; N(7)-methylguanine-tRNA biosynthesis. Its function is as follows. Catalyzes the formation of N(7)-methylguanine at position 46 (m7G46) in tRNA. This Bartonella henselae (strain ATCC 49882 / DSM 28221 / CCUG 30454 / Houston 1) (Rochalimaea henselae) protein is tRNA (guanine-N(7)-)-methyltransferase.